The chain runs to 320 residues: cUMP-AMP-activated phospholipase (320 aa).

A PNPLA domain is found at L23–I204. Residues G27–G32 carry the GXGXXG motif. Positions G59 to G63 match the GXSXG motif. S61 serves as the catalytic Nucleophile. D191 (proton acceptor) is an active-site residue. A DGA/G motif is present at residues D191 to G193.

Belongs to the patatin family.

It carries out the reaction a 1,2-diacyl-sn-glycero-3-phosphocholine + H2O = a 2-acyl-sn-glycero-3-phosphocholine + a fatty acid + H(+). Phospholipase activity is specifically activated upon 3',3'-cUAMP binding. Is not activated by the other cyclic dinucleotides 3',3'-cGAMP, 3',3'-c-diAMP and 3',3'-c-diGMP. Therefore, is specifically activated by only the nucleotide synthesized from its adjacently encoded nucleotidyltransferase (CdnE). In terms of biological role, effector phospholipase of a CBASS antivirus system. CBASS (cyclic oligonucleotide-based antiphage signaling system) provides immunity against bacteriophage. The CD-NTase protein synthesizes cyclic nucleotides in response to infection; these serve as specific second messenger signals. The signals activate a diverse range of effectors, leading to bacterial cell death and thus abortive phage infection. A type II-A(UA) CBASS system. Functionally, phospholipase that is activated upon binding to the cyclic dinucleotide (CDN) second messenger 3',3'-cyclic UMP-AMP (3',3'-cUAMP). The chain is cUMP-AMP-activated phospholipase from Escherichia coli.